A 249-amino-acid polypeptide reads, in one-letter code: 2-C-methyl-D-erythritol 4-phosphate cytidylyltransferase (249 aa).

Belongs to the IspD/TarI cytidylyltransferase family. IspD subfamily.

The catalysed reaction is 2-C-methyl-D-erythritol 4-phosphate + CTP + H(+) = 4-CDP-2-C-methyl-D-erythritol + diphosphate. It functions in the pathway isoprenoid biosynthesis; isopentenyl diphosphate biosynthesis via DXP pathway; isopentenyl diphosphate from 1-deoxy-D-xylulose 5-phosphate: step 2/6. Its function is as follows. Catalyzes the formation of 4-diphosphocytidyl-2-C-methyl-D-erythritol from CTP and 2-C-methyl-D-erythritol 4-phosphate (MEP). This is 2-C-methyl-D-erythritol 4-phosphate cytidylyltransferase from Chromohalobacter salexigens (strain ATCC BAA-138 / DSM 3043 / CIP 106854 / NCIMB 13768 / 1H11).